A 71-amino-acid chain; its full sequence is MAIQSKYSNTQVESIIAEVSAVLDKHQAPTDLRLMVLGNCVTDLLARKVPQEARAAVAEQFSKALAQSVKG.

Belongs to the UPF0352 family.

This chain is UPF0352 protein Ssed_1809, found in Shewanella sediminis (strain HAW-EB3).